Consider the following 101-residue polypeptide: Small ribosomal subunit protein uS14 (101 aa).

It belongs to the universal ribosomal protein uS14 family. In terms of assembly, part of the 30S ribosomal subunit. Contacts proteins S3 and S10.

Binds 16S rRNA, required for the assembly of 30S particles and may also be responsible for determining the conformation of the 16S rRNA at the A site. The protein is Small ribosomal subunit protein uS14 of Aromatoleum aromaticum (strain DSM 19018 / LMG 30748 / EbN1) (Azoarcus sp. (strain EbN1)).